We begin with the raw amino-acid sequence, 444 residues long: Glycerol-3-phosphate transporter (444 aa).

Over Met-1–Ile-36 the chain is Cytoplasmic. The helical transmembrane segment at Gly-37–Glu-57 threads the bilayer. At Gln-58–Thr-63 the chain is on the extracellular side. A helical transmembrane segment spans residues Glu-64–Gly-84. Topologically, residues Met-85–Arg-93 are cytoplasmic. The chain crosses the membrane as a helical span at residues Tyr-94–Ser-112. Residues Met-113 to Val-120 lie on the Extracellular side of the membrane. Residues Thr-121 to Cys-141 form a helical membrane-spanning segment. At Gly-142 to Ile-160 the chain is on the cytoplasmic side. A helical transmembrane segment spans residues Trp-161–Ile-180. At Ala-181–Val-189 the chain is on the extracellular side. Residues Phe-190 to Leu-207 form a helical membrane-spanning segment. Residues Val-208 to Ala-261 lie on the Cytoplasmic side of the membrane. A helical membrane pass occupies residues Asn-262 to Glu-282. Residues Ala-283–Ser-287 are Extracellular-facing. Residues Pro-288–Leu-308 traverse the membrane as a helical segment. The Cytoplasmic segment spans residues Cys-309 to Arg-321. The helical transmembrane segment at Ala-322 to Leu-341 threads the bilayer. Residues Asn-342 to Asn-346 are Extracellular-facing. The helical transmembrane segment at Pro-347–Ile-368 threads the bilayer. Residues Gly-369–Leu-387 are Cytoplasmic-facing. A helical membrane pass occupies residues Thr-388–Asp-409. Residues Arg-410–Asn-414 lie on the Extracellular side of the membrane. Residues Gly-415 to Trp-435 traverse the membrane as a helical segment. Topologically, residues Asn-436–Val-444 are cytoplasmic.

Belongs to the major facilitator superfamily. Organophosphate:Pi antiporter (OPA) (TC 2.A.1.4) family.

The protein localises to the cell membrane. Its function is as follows. Responsible for glycerol-3-phosphate uptake. In Bacillus subtilis (strain 168), this protein is Glycerol-3-phosphate transporter (glpT).